The sequence spans 130 residues: MARVTVEDCIDKVDNRFDLVLLAAHRARMISSGSQLTIDRDNDKNPVVALREIADSTISPEDLKEELVHSLQKFVEVDEPEPDTVPLIGSAGASVDADDTEVAVERMTEEELLKGLEGLAPPEEQPEEDE.

The tract at residues 110–130 is disordered; sequence EELLKGLEGLAPPEEQPEEDE.

It belongs to the RNA polymerase subunit omega family. In terms of assembly, the RNAP catalytic core consists of 2 alpha, 1 beta, 1 beta' and 1 omega subunit. When a sigma factor is associated with the core the holoenzyme is formed, which can initiate transcription.

The enzyme catalyses RNA(n) + a ribonucleoside 5'-triphosphate = RNA(n+1) + diphosphate. Promotes RNA polymerase assembly. Latches the N- and C-terminal regions of the beta' subunit thereby facilitating its interaction with the beta and alpha subunits. The protein is DNA-directed RNA polymerase subunit omega of Bradyrhizobium sp. (strain BTAi1 / ATCC BAA-1182).